A 743-amino-acid chain; its full sequence is MLNVVSKTIDLGDGRSIKIETGKLAKQADGAVTVTMGNTVLLATVCAAKDANPGCDFMPLQVEYKEKYSAIGRFPGGFTRREGKASDYEILTCRLVDRALRPLFPDNYHAEVFVNVILFSADGEDMPDALAGLAASAALAVSDIPFNGPISEVRVARVDGRYIVNPTFEQLERADIDLMVGATMDNIMMVEGEMDEVQESEMLEGIRVAHEAIKVQCKAQLELSEAVGKLQKREYSHEVNDEDLRKKVHDECYARAYEVATSGTGKHERGEAFEKIVEEFKAQYTEEELAEKAEMIARYYHDVEKEAMRRAILDEGKRLDGRKTTEIRPIWIETDCLPGPHGSAIFTRGETQSLTTVTLGTKSDEKLVDDVLNYTKERFLLHYNFPPFSTGEARPQRGVGRREIGHGNLAHRALKRMIPTDYPYVVRVISDILESNGSSSMATVCAGTLALRDAGVQIRKPVSGIAMGLISENQGKNYAILSDILGDEDHLGDMDFKVTGTKDGITATQMDIKVDGLSYEILENALEQAKQGRLHILGKIMEAQPETRDDLKPHAPRIEKMHIGKEFIGAVIGPGGKIIQGIQEKSGATVNIEEVDGMGVIEISGTNKPCIDAAIGMIKGIVAMPEVGETYPGKITSVMPYGCFVEFLPGKEGLLHISEVDWKRFETIEDTNLKEGESINVKLLDIDPKTGKFKLSRKVLLEKPEGYVEPQPRERRERREGGREGGRNFERRGGDRDHREPRG.

Mg(2+) contacts are provided by aspartate 489 and aspartate 495. The 63-residue stretch at proline 556–isoleucine 618 folds into the KH domain. An S1 motif domain is found at glycine 628 to lysine 698. Positions proline 704–glycine 743 are disordered.

This sequence belongs to the polyribonucleotide nucleotidyltransferase family. Requires Mg(2+) as cofactor.

It localises to the cytoplasm. The enzyme catalyses RNA(n+1) + phosphate = RNA(n) + a ribonucleoside 5'-diphosphate. Its function is as follows. Involved in mRNA degradation. Catalyzes the phosphorolysis of single-stranded polyribonucleotides processively in the 3'- to 5'-direction. The chain is Polyribonucleotide nucleotidyltransferase from Porphyromonas gingivalis (strain ATCC BAA-308 / W83).